Consider the following 494-residue polypeptide: Costunolide synthase (494 aa).

The chain crosses the membrane as a helical span at residues 3-23; the sequence is PLTIVSLVVASLFLFAFWALS. Residue C432 coordinates heme.

Belongs to the cytochrome P450 family. Requires heme as cofactor.

The protein localises to the membrane. It carries out the reaction germacra-1(10),4,11(13)-trien-12-oate + reduced [NADPH--hemoprotein reductase] + O2 = (+)-costunolide + oxidized [NADPH--hemoprotein reductase] + 2 H2O. In terms of biological role, hydroxylates germacrene A acid to 6-alpha-hydroxy-germacrne A acid, a precursor of sesquiterpene lactones that spontaneously undergoes a lactonization which yields costunolide. Costunolide can then spontaneously conjugate to glutathione or cysteine. In Cichorium intybus (Chicory), this protein is Costunolide synthase (CYP71BL3).